Reading from the N-terminus, the 311-residue chain is Methionyl-tRNA formyltransferase (311 aa).

109-112 serves as a coordination point for (6S)-5,6,7,8-tetrahydrofolate; sequence SLLP.

This sequence belongs to the Fmt family.

The catalysed reaction is L-methionyl-tRNA(fMet) + (6R)-10-formyltetrahydrofolate = N-formyl-L-methionyl-tRNA(fMet) + (6S)-5,6,7,8-tetrahydrofolate + H(+). Attaches a formyl group to the free amino group of methionyl-tRNA(fMet). The formyl group appears to play a dual role in the initiator identity of N-formylmethionyl-tRNA by promoting its recognition by IF2 and preventing the misappropriation of this tRNA by the elongation apparatus. The chain is Methionyl-tRNA formyltransferase from Moorella thermoacetica (strain ATCC 39073 / JCM 9320).